A 605-amino-acid polypeptide reads, in one-letter code: Conglutin beta 7 (605 aa).

An N-terminal signal peptide occupies residues 1 to 30; the sequence is MARMRVRFPTLVLLLGILFLMAVSIGIAYG. Positions 37 to 105 are enriched in basic and acidic residues; it reads NHERPGEREH…REPCREREQE (69 aa). 3 disordered regions span residues 37-193, 346-367, and 382-405; these read NHER…RFQT, LGNE…SYQD, and LRKH…NLRS. A compositionally biased stretch (low complexity) spans 140–149; the sequence is QGSSSSSRKQ. Residues 150 to 179 show a composition bias toward basic and acidic residues; the sequence is SGYERRQYHERREQRDEKEKEQDSRSDSRR. Positions 184–342 constitute a Cupin type-1 1 domain; it reads YHFSSERFQT…TFNTRYEEIQ (159 aa). Residues 401–563 form the Cupin type-1 2 domain; that stretch reads FNLRSNESIY…TFPGSAQDVE (163 aa). N-linked (GlcNAc...) asparagine glycosylation is found at Asn406 and Asn513. Residues 574–593 are disordered; it reads FANAQPQQKQQREKEGRRGR.

This sequence belongs to the 7S seed storage protein family. As to quaternary structure, component of globulins complexes which accumulate in seeds.

Seed storage protein. Accumulates during seed development and is hydrolyzed after germination to provide a carbon and nitrogen source for the developing seedling. The polypeptide is Conglutin beta 7 (Lupinus angustifolius (Narrow-leaved blue lupine)).